The primary structure comprises 1063 residues: Endo-1,4-beta-xylanase 2 (1063 aa).

CBM-cenC domains are found at residues 5 to 146 (NIVM…GPAP), 183 to 313 (NIIK…LEGP), 348 to 482 (NHIF…IEGP), and 517 to 662 (NIVS…QGPS). In terms of domain architecture, GH10 spans 711 to 1006 (SGATVKIRQT…NEAGKRFLEI (296 aa)). Glu840 serves as the catalytic Proton donor. The active-site Nucleophile is the Glu941.

The protein belongs to the glycosyl hydrolase 10 (cellulase F) family.

It catalyses the reaction Endohydrolysis of (1-&gt;4)-beta-D-xylosidic linkages in xylans.. Its pathway is glycan degradation; xylan degradation. Binds to and hydrolyzes insoluble and soluble xylan substrates. The polypeptide is Endo-1,4-beta-xylanase 2 (Arabidopsis thaliana (Mouse-ear cress)).